The chain runs to 317 residues: MRSYLDFEKPVAELEAKVEELRALASAGDGVTITDEVQRLETKAREALLALYANLTPWQKTLVARHPQRPHFADFAKGLFEDFTPLAGDRKFGEDEAIIGGFARFRGEAVCVLGHEKGSTTETRIRHNFGMARPEGYRKAVRIMELADRFGIPLISLVDTAGAYPGIGAEERGQAEAIARSTDACLALGAPNVALVIGEGGSGGAIAIATANKVLMMEHAIYSVISPEGAASILWRDTAKAQEAATNMKITAQDLLKFGIIDAIVKEPPGGAHRDPEATIGAAGDAIADALSQLAGLDGPAVRKARRDKFLAIGRSL.

Residues 39–293 (RLETKAREAL…GDAIADALSQ (255 aa)) enclose the CoA carboxyltransferase C-terminal domain.

Belongs to the AccA family. As to quaternary structure, acetyl-CoA carboxylase is a heterohexamer composed of biotin carboxyl carrier protein (AccB), biotin carboxylase (AccC) and two subunits each of ACCase subunit alpha (AccA) and ACCase subunit beta (AccD).

It localises to the cytoplasm. It carries out the reaction N(6)-carboxybiotinyl-L-lysyl-[protein] + acetyl-CoA = N(6)-biotinyl-L-lysyl-[protein] + malonyl-CoA. Its pathway is lipid metabolism; malonyl-CoA biosynthesis; malonyl-CoA from acetyl-CoA: step 1/1. Its function is as follows. Component of the acetyl coenzyme A carboxylase (ACC) complex. First, biotin carboxylase catalyzes the carboxylation of biotin on its carrier protein (BCCP) and then the CO(2) group is transferred by the carboxyltransferase to acetyl-CoA to form malonyl-CoA. In Xanthobacter autotrophicus (strain ATCC BAA-1158 / Py2), this protein is Acetyl-coenzyme A carboxylase carboxyl transferase subunit alpha.